The following is a 634-amino-acid chain: 1-deoxy-D-xylulose-5-phosphate synthase (634 aa).

Residues histidine 74 and 115–117 (AHS) contribute to the thiamine diphosphate site. Aspartate 146 is a Mg(2+) binding site. Residues 147–148 (GA), asparagine 176, tyrosine 283, and glutamate 365 each bind thiamine diphosphate. Residue asparagine 176 participates in Mg(2+) binding.

This sequence belongs to the transketolase family. DXPS subfamily. As to quaternary structure, homodimer. Mg(2+) serves as cofactor. Requires thiamine diphosphate as cofactor.

The catalysed reaction is D-glyceraldehyde 3-phosphate + pyruvate + H(+) = 1-deoxy-D-xylulose 5-phosphate + CO2. It functions in the pathway metabolic intermediate biosynthesis; 1-deoxy-D-xylulose 5-phosphate biosynthesis; 1-deoxy-D-xylulose 5-phosphate from D-glyceraldehyde 3-phosphate and pyruvate: step 1/1. Functionally, catalyzes the acyloin condensation reaction between C atoms 2 and 3 of pyruvate and glyceraldehyde 3-phosphate to yield 1-deoxy-D-xylulose-5-phosphate (DXP). The protein is 1-deoxy-D-xylulose-5-phosphate synthase of Burkholderia pseudomallei (strain 668).